The primary structure comprises 254 residues: Geranylgeranylglyceryl phosphate synthase (254 aa).

Mg(2+) contacts are provided by aspartate 28 and serine 57. Sn-glycerol 1-phosphate contacts are provided by residues 176-182, 207-208, and 229-230; these read YLEAGSG, GG, and GT.

It belongs to the GGGP/HepGP synthase family. Group II subfamily. Mg(2+) serves as cofactor.

It localises to the cytoplasm. It catalyses the reaction sn-glycerol 1-phosphate + (2E,6E,10E)-geranylgeranyl diphosphate = sn-3-O-(geranylgeranyl)glycerol 1-phosphate + diphosphate. The protein operates within membrane lipid metabolism; glycerophospholipid metabolism. Prenyltransferase that catalyzes the transfer of the geranylgeranyl moiety of geranylgeranyl diphosphate (GGPP) to the C3 hydroxyl of sn-glycerol-1-phosphate (G1P). This reaction is the first ether-bond-formation step in the biosynthesis of archaeal membrane lipids. This Pyrococcus horikoshii (strain ATCC 700860 / DSM 12428 / JCM 9974 / NBRC 100139 / OT-3) protein is Geranylgeranylglyceryl phosphate synthase.